The chain runs to 641 residues: MTLRGVSMVLTWCLLVSKAWSSGDDSSIDIRGPRLVMPSQARDSCSTQQTTELCVEGNWGRKCPGGCRMLSMLSRTEKDSMRRVDELTKRLARMIQLHTEIHSYYRSVSDVSNQVVTDREDTEARFYALLSDLERKIIYLQRRINGQLTLLSQLRNGIAQQTSTILQLEVDTDVALRTCKGACARQVRYRVDKEMNLQLEKANAYLSGINLALFEEIVHESFSVERDDARSLHPYSGGPASDSEPRDGDGTASQATGFRSDATDPGVSHGNSSKSFGNVDERSKVEKDVNVASTSSVSSSSSSSSSSSSTSSTISSTQKTEELSFKKVSVSTAAVAGKDTDDFQWDSVQTASQTEEGFVRDTGADSTWNQHNVQWNSDFGTASDDEPDFQARSHRTNLSEYIDCLDVLQRRPGGKASGLYEVRPRGAKRALTVHCEQDTDGGGWTLVQQREDGSLNFNRSFSAYREGFGTVDGSGHGELWLGLEAMYLLAHEDSTMRVELQGWDGAGAHAEYTVTLRDDSKGYALQVSDYRGTAGNALVSGVADDPELTSHGGMTFSTYDRDTDKWSDGSCAEWYGGGWWINACQAANLNGVYYQGGPYDPREKPPYEVENGVVWATYRGSDYSLKRTAVRFRRVQIPIVE.

The first 23 residues, 1-23 (MTLRGVSMVLTWCLLVSKAWSSG), serve as a signal peptide directing secretion. A coiled-coil region spans residues 107–226 (SVSDVSNQVV…IVHESFSVER (120 aa)). The disordered stretch occupies residues 228-327 (DARSLHPYSG…QKTEELSFKK (100 aa)). Residue asparagine 271 is glycosylated (N-linked (GlcNAc...) asparagine). Residues 279–289 (VDERSKVEKDV) show a composition bias toward basic and acidic residues. Residues 293–317 (STSSVSSSSSSSSSSSSTSSTISST) show a composition bias toward low complexity. Residues 395–636 (RTNLSEYIDC…RTAVRFRRVQ (242 aa)) enclose the Fibrinogen C-terminal domain. A glycan (N-linked (GlcNAc...) asparagine) is linked at asparagine 397. A disulfide bridge connects residues cysteine 404 and cysteine 435. The N-linked (GlcNAc...) asparagine glycan is linked to asparagine 458. Cysteine 571 and cysteine 584 are joined by a disulfide.

In terms of assembly, heterohexamer; disulfide linked. Contains 2 sets of 3 non-identical chains (alpha, beta and gamma). The 2 heterotrimers are in head to head conformation with the N-termini in a small central domain. Post-translationally, conversion of fibrinogen to fibrin is triggered by thrombin, which cleaves fibrinopeptides A and B from alpha and beta chains, and thus exposes the N-terminal polymerization sites responsible for the formation of the soft clot. The soft clot is converted into the hard clot by factor XIIIA which catalyzes the epsilon-(gamma-glutamyl)lysine cross-linking between gamma chains (stronger) and between alpha chains (weaker) of different monomers. Forms F13A-mediated cross-links between a glutamine and the epsilon-amino group of a lysine residue, forming fibronectin-fibrinogen heteropolymers.

The protein resides in the secreted. Its function is as follows. Fibrinogen has a double function: yielding monomers that polymerize into fibrin and acting as a cofactor in platelet aggregation. This Petromyzon marinus (Sea lamprey) protein is Fibrinogen alpha-2 chain.